The following is a 1097-amino-acid chain: DNA-directed RNA polymerase subunit beta (1097 aa).

The tract at residues 1072–1097 is disordered; sequence QDVNPRRSTPSRPTYESLGVADYDED.

This sequence belongs to the RNA polymerase beta chain family. In terms of assembly, in cyanobacteria the RNAP catalytic core is composed of 2 alpha, 1 beta, 1 beta', 1 gamma and 1 omega subunit. When a sigma factor is associated with the core the holoenzyme is formed, which can initiate transcription.

It carries out the reaction RNA(n) + a ribonucleoside 5'-triphosphate = RNA(n+1) + diphosphate. Its function is as follows. DNA-dependent RNA polymerase catalyzes the transcription of DNA into RNA using the four ribonucleoside triphosphates as substrates. The sequence is that of DNA-directed RNA polymerase subunit beta from Synechococcus sp. (strain CC9902).